Here is a 541-residue protein sequence, read N- to C-terminus: Protein wntless homolog (541 aa).

The first 42 residues, 1–42, serve as a signal peptide directing secretion; it reads MAGAIIENMSTRKLCIVGGILLVFQVIAFLVGGLIAPSPTTA. Residues 43–232 are Lumenal-facing; the sequence is VPYMSVKCID…GIHQNGGFTK (190 aa). A helical membrane pass occupies residues 233-253; the sequence is VWFAMKTFLTPSILIIMVWYW. The Cytoplasmic segment spans residues 254–268; that stretch reads RRITLMTRAPVLLEK. Residues 269–289 form a helical membrane-spanning segment; it reads VIFALGISMTFINIPVEWFSI. Topologically, residues 290–303 are lumenal; sequence GFDWTWMLLFGDIR. Residues 304–324 traverse the membrane as a helical segment; that stretch reads QGIFYAMLLSFWIIFCGEHMM. The Cytoplasmic portion of the chain corresponds to 325 to 331; it reads DQNERNR. The helical transmembrane segment at 332 to 352 threads the bilayer; the sequence is LSGYWKQVGPIAVGSFCLFIF. Over 353–380 the chain is Lumenal; the sequence is DMCERGVQLKNPFYSIWTTEVGTELAMA. The helical transmembrane segment at 381–401 threads the bilayer; it reads FIIVAGICLCLYFLFLCFMVF. The Cytoplasmic portion of the chain corresponds to 402 to 431; sequence QVFRNISGKQSSLPAMSKARRLHYEGLIFR. The helical transmembrane segment at 432-452 threads the bilayer; that stretch reads FKFLMLITLACAAMTVIFFIV. The Lumenal segment spans residues 453–471; the sequence is SQVTEGHWKWGDITIQVNS. A helical transmembrane segment spans residues 472-492; it reads AFFTGIYGMWNLYVFALMFLY. Over 493-541 the chain is Cytoplasmic; it reads APSHKNYGEDQSNGDLGVSSGEELQLTTTITHVDGPTEVYKLARKEAQE.

Belongs to the wntless family.

The protein resides in the golgi apparatus membrane. The protein localises to the cytoplasmic vesicle membrane. Its function is as follows. May play an essential role in Wnt signaling pathway. May be required for Wnt-dependent patterning processes. In Gallus gallus (Chicken), this protein is Protein wntless homolog (WLS).